A 105-amino-acid polypeptide reads, in one-letter code: ATP-dependent Clp protease adapter protein ClpS (105 aa).

The protein belongs to the ClpS family. In terms of assembly, binds to the N-terminal domain of the chaperone ClpA.

Involved in the modulation of the specificity of the ClpAP-mediated ATP-dependent protein degradation. The sequence is that of ATP-dependent Clp protease adapter protein ClpS from Klebsiella pneumoniae (strain 342).